A 786-amino-acid chain; its full sequence is Rho GTPase-activating protein 10 (786 aa).

The region spanning 7-262 (EFSDCYLDSP…IRQNPKDQKR (256 aa)) is the BAR domain. The PH domain occupies 265–372 (QFTAEGYLYV…WLEALGGKEA (108 aa)). The Rho-GAP domain maps to 389–574 (AQLDKMGFTI…ILIENHEKIF (186 aa)). Disordered regions lie at residues 584–609 (EPTCLSASPPNAPPRQSKRQGQRTKR) and 622–714 (EGDS…PFPL). Positions 599–609 (QSKRQGQRTKR) are enriched in basic residues. The segment covering 634 to 649 (PSSSQDSLSTPSPTTS) has biased composition (low complexity). Residues 673 to 701 (TATTPSQTRPSMVQWLNMQSPTTPSSNPA) are compositionally biased toward polar residues. Pro residues predominate over residues 702–714 (GTPPSPRMSPFPL). Positions 728–786 (VINRKARAVYPCEAEHSSELSFEIGAIFEDVQTSREPGWLEGTLNGKRGLIPQNYVKLL) constitute an SH3 domain.

As to quaternary structure, interacts with PKN3. Interacts with caspase-activated PAK2 proteolytic fragment PAK-2p34; the interaction does not affect ARHGAP10 GTPase activation activity towards RHOA and CDC42. Interacts via its SH3 domain with PTK2/FAK1. Interacts with PTK2B/PYK2; the interaction negatively regulates ARHGAP10 GTPase-activating activity. Interacts with MICAL1 and WDR44; complex formation might transit from GRAF2/ARHGAP10-MICAL1 to GRAF2/ARHGAP10-WDR44 complexes. Post-translationally, phosphorylated on tyrosine residues, probably involving PTK2B/PYK2. In terms of tissue distribution, high levels of expression in brain, testes, liver, heart and kidney.

The protein resides in the cytoplasm. It is found in the perinuclear region. It localises to the cell membrane. The protein localises to the endosome membrane. GTPase-activating protein that catalyzes the conversion of active GTP-bound Rho GTPases to their inactive GDP-bound form, thus suppressing various Rho GTPase-mediated cellular processes. Also converts Cdc42 to an inactive GDP-bound state. Essential for PTKB2 regulation of cytoskeletal organization via Rho family GTPases. Inhibits PAK2 proteolytic fragment PAK-2p34 kinase activity and changes its localization from the nucleus to the perinuclear region. Stabilizes PAK-2p34 thereby increasing stimulation of cell death. Associates with MICAL1 on the endosomal membrane to promote Rab8-Rab10-dependent tubule extension. After dissociation with MICAL1, recruits WDR44 which connects the endoplasmic reticulum (ER) with the endosomal tubule, thereby participating in the export of a subset of neosynthesized proteins. The sequence is that of Rho GTPase-activating protein 10 (Arhgap10) from Mus musculus (Mouse).